Reading from the N-terminus, the 223-residue chain is Deoxyribose-phosphate aldolase (223 aa).

Asp-89 functions as the Proton donor/acceptor in the catalytic mechanism. Lys-152 acts as the Schiff-base intermediate with acetaldehyde in catalysis. Residue Lys-181 is the Proton donor/acceptor of the active site.

This sequence belongs to the DeoC/FbaB aldolase family. DeoC type 1 subfamily.

It is found in the cytoplasm. The catalysed reaction is 2-deoxy-D-ribose 5-phosphate = D-glyceraldehyde 3-phosphate + acetaldehyde. It participates in carbohydrate degradation; 2-deoxy-D-ribose 1-phosphate degradation; D-glyceraldehyde 3-phosphate and acetaldehyde from 2-deoxy-alpha-D-ribose 1-phosphate: step 2/2. Functionally, catalyzes a reversible aldol reaction between acetaldehyde and D-glyceraldehyde 3-phosphate to generate 2-deoxy-D-ribose 5-phosphate. The chain is Deoxyribose-phosphate aldolase from Bacillus cereus (strain G9842).